Consider the following 247-residue polypeptide: ATP synthase subunit a (247 aa).

A run of 6 helical transmembrane segments spans residues 24 to 44 (IAFT…AAMM), 82 to 102 (FFPL…VGII), 112 to 132 (IIVT…YGFY), 141 to 161 (LFVP…IEII), 181 to 201 (GHVT…LGFV), and 206 to 226 (ALLP…VAFL).

The protein belongs to the ATPase A chain family. In terms of assembly, F-type ATPases have 2 components, CF(1) - the catalytic core - and CF(0) - the membrane proton channel. CF(1) has five subunits: alpha(3), beta(3), gamma(1), delta(1), epsilon(1). CF(0) has four main subunits: a, b, b' and c.

It localises to the cell inner membrane. Functionally, key component of the proton channel; it plays a direct role in the translocation of protons across the membrane. The protein is ATP synthase subunit a of Bradyrhizobium sp. (strain ORS 278).